Reading from the N-terminus, the 554-residue chain is Hydroxylamine reductase (554 aa).

4 residues coordinate [2Fe-2S] cluster: C3, C6, C18, and C25. Residues H252, E276, C320, C408, C436, C461, E495, and K497 each coordinate hybrid [4Fe-2O-2S] cluster. Cysteine persulfide is present on C408.

It belongs to the HCP family. [2Fe-2S] cluster serves as cofactor. The cofactor is hybrid [4Fe-2O-2S] cluster.

The protein resides in the cytoplasm. It catalyses the reaction A + NH4(+) + H2O = hydroxylamine + AH2 + H(+). Its function is as follows. Catalyzes the reduction of hydroxylamine to form NH(3) and H(2)O. This Shewanella sp. (strain MR-4) protein is Hydroxylamine reductase.